Here is a 443-residue protein sequence, read N- to C-terminus: ATP-dependent protease ATPase subunit HslU (443 aa).

Residues Ile18, 60-65 (GVGKTE), Asp256, Glu321, and Arg393 each bind ATP.

The protein belongs to the ClpX chaperone family. HslU subfamily. As to quaternary structure, a double ring-shaped homohexamer of HslV is capped on each side by a ring-shaped HslU homohexamer. The assembly of the HslU/HslV complex is dependent on binding of ATP.

The protein localises to the cytoplasm. Its function is as follows. ATPase subunit of a proteasome-like degradation complex; this subunit has chaperone activity. The binding of ATP and its subsequent hydrolysis by HslU are essential for unfolding of protein substrates subsequently hydrolyzed by HslV. HslU recognizes the N-terminal part of its protein substrates and unfolds these before they are guided to HslV for hydrolysis. The sequence is that of ATP-dependent protease ATPase subunit HslU from Salmonella typhi.